A 201-amino-acid chain; its full sequence is Holliday junction branch migration complex subunit RuvA (201 aa).

The segment at 1 to 64 (MIGRLHGKII…EDAHLLFGFA (64 aa)) is domain I. A domain II region spans residues 65–143 (QKQDRTLFRE…GVAQSDFFEE (79 aa)). The interval 144-154 (HSVETIVATHS) is flexible linker. The interval 154–201 (SHDPADEARDALVALGYKLADAEKMIKKVNKAGATSEQLIREALKASL) is domain III.

It belongs to the RuvA family. In terms of assembly, homotetramer. Forms an RuvA(8)-RuvB(12)-Holliday junction (HJ) complex. HJ DNA is sandwiched between 2 RuvA tetramers; dsDNA enters through RuvA and exits via RuvB. An RuvB hexamer assembles on each DNA strand where it exits the tetramer. Each RuvB hexamer is contacted by two RuvA subunits (via domain III) on 2 adjacent RuvB subunits; this complex drives branch migration. In the full resolvosome a probable DNA-RuvA(4)-RuvB(12)-RuvC(2) complex forms which resolves the HJ.

It localises to the cytoplasm. Functionally, the RuvA-RuvB-RuvC complex processes Holliday junction (HJ) DNA during genetic recombination and DNA repair, while the RuvA-RuvB complex plays an important role in the rescue of blocked DNA replication forks via replication fork reversal (RFR). RuvA specifically binds to HJ cruciform DNA, conferring on it an open structure. The RuvB hexamer acts as an ATP-dependent pump, pulling dsDNA into and through the RuvAB complex. HJ branch migration allows RuvC to scan DNA until it finds its consensus sequence, where it cleaves and resolves the cruciform DNA. This chain is Holliday junction branch migration complex subunit RuvA, found in Actinobacillus pleuropneumoniae serotype 7 (strain AP76).